A 457-amino-acid chain; its full sequence is tRNA-2-methylthio-N(6)-dimethylallyladenosine synthase (457 aa).

The region spanning 3–120 (KKVYVKTFGC…LPQMIDARRE (118 aa)) is the MTTase N-terminal domain. [4Fe-4S] cluster contacts are provided by C12, C49, C83, C157, C161, and C164. Residues 143-377 (RVEGPSAFVS…QATIEENVAR (235 aa)) enclose the Radical SAM core domain. Positions 380–447 (QSMLGKVERI…PHSLRGELVL (68 aa)) constitute a TRAM domain.

It belongs to the methylthiotransferase family. MiaB subfamily. Monomer. It depends on [4Fe-4S] cluster as a cofactor.

The protein localises to the cytoplasm. The catalysed reaction is N(6)-dimethylallyladenosine(37) in tRNA + (sulfur carrier)-SH + AH2 + 2 S-adenosyl-L-methionine = 2-methylsulfanyl-N(6)-dimethylallyladenosine(37) in tRNA + (sulfur carrier)-H + 5'-deoxyadenosine + L-methionine + A + S-adenosyl-L-homocysteine + 2 H(+). Its function is as follows. Catalyzes the methylthiolation of N6-(dimethylallyl)adenosine (i(6)A), leading to the formation of 2-methylthio-N6-(dimethylallyl)adenosine (ms(2)i(6)A) at position 37 in tRNAs that read codons beginning with uridine. The sequence is that of tRNA-2-methylthio-N(6)-dimethylallyladenosine synthase from Burkholderia pseudomallei (strain 1710b).